We begin with the raw amino-acid sequence, 278 residues long: Inositol oxygenase (278 aa).

Substrate contacts are provided by residues Arg-22 and 78–80; that span reads DES. Fe cation is bound by residues His-91, His-116, and Asp-117. Residues Lys-120 and 134–135 contribute to the substrate site; that span reads GD. Residues His-187, His-213, and Asp-246 each contribute to the Fe cation site. A substrate-binding site is contributed by 213–214; it reads HS.

The protein belongs to the myo-inositol oxygenase family. Requires Fe cation as cofactor.

The protein resides in the cytoplasm. The catalysed reaction is myo-inositol + O2 = D-glucuronate + H2O + H(+). It participates in polyol metabolism; myo-inositol degradation into D-glucuronate; D-glucuronate from myo-inositol: step 1/1. The polypeptide is Inositol oxygenase (miox) (Danio rerio (Zebrafish)).